The sequence spans 529 residues: NADPH-dependent thioredoxin reductase 3 (529 aa).

The N-terminal 67 residues, M1–S67, are a transit peptide targeting the chloroplast. The disordered stretch occupies residues T54–S78. Residues L64–S78 show a composition bias toward low complexity. FAD is bound by residues S91–A94, E113–V120, N133, V166, and C220. Cysteines 217 and 220 form a disulfide. T240, R265, I324, and Y344 together coordinate NADP(+). FAD contacts are provided by residues D364 and R371–V374. R371 contacts NADP(+). The region spanning P403–K529 is the Thioredoxin domain. Active-site nucleophile residues include C454 and C457. C454 and C457 are disulfide-bonded.

This sequence belongs to the class-II pyridine nucleotide-disulfide oxidoreductase family. May homodimerize. Interacts with the 2-Cys peroxiredoxin BAS1. It depends on FAD as a cofactor.

The protein resides in the plastid. It is found in the chloroplast. It carries out the reaction [thioredoxin]-dithiol + NADP(+) = [thioredoxin]-disulfide + NADPH + H(+). Functionally, thioredoxin reductase (TR) that exhibits both TR and thioredoxin (Trx) activities. Contains a C-terminal functional Trx domain. Functions as an electron donor for plastidial 2-Cys peroxiredoxins and participates in a NADPH-dependent hydrogen peroxide scavenging system in chloroplasts in the dark. Required for chlorophyll biosynthesis and biogenesis of the photosynthetic apparatus. Activates aerobic cyclase which converts Mg-protoporhyrin monomethyl ester into protochlorophyllide. Involved in a light-dependent regulation of starch biosynthesis by redox activation of the ADP-glucose pyrophosphorylase (AGPase), a central enzyme of starch synthesis. The protein is NADPH-dependent thioredoxin reductase 3 of Arabidopsis thaliana (Mouse-ear cress).